Consider the following 346-residue polypeptide: Superficial pseudohyphal growth protein 1 (346 aa).

The interval 289–308 is disordered; the sequence is NFGEDEDNEEDNEDDLPDAA. The span at 291–305 shows a compositional bias: acidic residues; the sequence is GEDEDNEEDNEDDLP.

It localises to the nucleus. Functionally, probable transcription factor required for superficial pseudohyphal development in response to nitrogen starvation. The protein is Superficial pseudohyphal growth protein 1 (SFG1) of Saccharomyces cerevisiae (strain ATCC 204508 / S288c) (Baker's yeast).